The primary structure comprises 126 residues: Small ribosomal subunit protein uS13 (126 aa).

A disordered region spans residues 94–126; it reads GLPVRGQKTRNNAHTVKGKPKAAIAGKKKNKVN. The segment covering 109-126 has biased composition (basic residues); sequence VKGKPKAAIAGKKKNKVN.

This sequence belongs to the universal ribosomal protein uS13 family. In terms of assembly, part of the 30S ribosomal subunit. Forms a loose heterodimer with protein S19. Forms two bridges to the 50S subunit in the 70S ribosome.

Its function is as follows. Located at the top of the head of the 30S subunit, it contacts several helices of the 16S rRNA. In the 70S ribosome it contacts the 23S rRNA (bridge B1a) and protein L5 of the 50S subunit (bridge B1b), connecting the 2 subunits; these bridges are implicated in subunit movement. Contacts the tRNAs in the A and P-sites. This Aster yellows witches'-broom phytoplasma (strain AYWB) protein is Small ribosomal subunit protein uS13.